The sequence spans 168 residues: Myelin basic protein (168 aa).

Ala-1 is modified (N-acetylalanine). A phosphoserine mark is found at Ser-7 and Ser-12. The residue at position 14 (Tyr-14) is a Phosphotyrosine. Thr-17 is subject to Phosphothreonine. Position 19 is a phosphoserine (Ser-19). Residue Thr-20 is modified to Phosphothreonine. Citrulline occurs at positions 25 and 31. Position 35 is a phosphothreonine (Thr-35). Ser-40 carries the phosphoserine modification. The disordered stretch occupies residues 42-84 (GRFFSSDRGAPKRGSGKDHAARTTHYGSLPQKSGHRPQDENPV). Residues Arg-43 and Arg-49 each carry the omega-N-methylarginine modification. The segment at 45 to 86 (FSSDRGAPKRGSGKDHAARTTHYGSLPQKSGHRPQDENPVVH) is induces experimental autoimmune encephalomyelitis (EAE). A Phosphoserine modification is found at Ser-56. Residue Thr-65 is modified to Phosphothreonine. Residue Tyr-67 is modified to Phosphotyrosine. The residue at position 74 (Ser-74) is a Phosphoserine. A phosphothreonine mark is found at Thr-93 and Thr-96. Gln-101 bears the Deamidated glutamine; partial mark. An Omega-N-methylarginine; alternate modification is found at Arg-105. At Arg-105 the chain carries Symmetric dimethylarginine; alternate. Ser-113 bears the Phosphoserine mark. Lys-120 is modified (N6-acetyllysine). A Citrulline modification is found at Arg-128. Gln-145 is modified (deamidated glutamine). Arg-157 carries the post-translational modification Citrulline. Ser-159 bears the Phosphoserine mark. Ser-163 bears the Phosphoserine; by UHMK1 mark. The residue at position 168 (Arg-168) is a Citrulline.

This sequence belongs to the myelin basic protein family. In terms of assembly, homodimer. As in other animals, several charge isomers may be produced as a result of optional post-translational modifications, such as phosphorylation of serine or threonine residues, deamidation of glutamine or asparagine residues, citrullination and methylation of arginine residues. Post-translationally, phosphorylated by TAOK2, VRK2, MAPK11, MAPK12, MAPK14 and MINK1. In terms of processing, proteolytically cleaved in B cell lysosomes by cathepsin CTSG which degrades the major immunogenic MBP epitope and prevents the activation of MBP-specific autoreactive T cells. As to expression, found in both the central and the peripheral nervous system.

It is found in the myelin membrane. In terms of biological role, is, with PLP, the most abundant protein component of the myelin membrane in the CNS. Has a role in both the formation and stabilization of this compact multilayer arrangement of bilayers. Each splice variant and charge isomer may have a specialized function in the assembly of an optimized, biochemically functional myelin membrane. The chain is Myelin basic protein (MBP) from Oryctolagus cuniculus (Rabbit).